A 289-amino-acid polypeptide reads, in one-letter code: E3 ubiquitin-protein ligase MARCHF5 (289 aa).

Residues 4-73 form an RING-CH-type zinc finger; sequence VDEPPEKHCW…PQCGTEYRIV (70 aa). Residues Cys-12, Cys-15, Cys-31, Cys-33, His-41, Cys-44, Cys-63, and Cys-66 each coordinate Zn(2+). Transmembrane regions (helical) follow at residues 97-117, 137-157, 202-222, and 236-256; these read FAAAGVVVGTVYWSAVTYGAV, PLFLLMGLPTIPVMLVLGKMI, LSVSRTLCGALIFPSIANLVG, and TILGGIAFVVMKGVLKVYFKQ.

The protein localises to the mitochondrion outer membrane. It is found in the endoplasmic reticulum membrane. The catalysed reaction is S-ubiquitinyl-[E2 ubiquitin-conjugating enzyme]-L-cysteine + [acceptor protein]-L-lysine = [E2 ubiquitin-conjugating enzyme]-L-cysteine + N(6)-ubiquitinyl-[acceptor protein]-L-lysine.. It participates in protein modification; protein ubiquitination. Mitochondrial E3 ubiquitin-protein ligase that plays a crucial role in the control of mitochondrial morphology by acting as a positive regulator of mitochondrial fission. May play a role in the prevention of cell senescence acting as a regulator of mitochondrial quality control. In Danio rerio (Zebrafish), this protein is E3 ubiquitin-protein ligase MARCHF5 (marchf5).